Here is a 364-residue protein sequence, read N- to C-terminus: Probable dual-specificity RNA methyltransferase RlmN (364 aa).

Residue E107 is the Proton acceptor of the active site. The region spanning 113 to 346 is the Radical SAM core domain; sequence HDYGNSVCVT…ATIRREQGSD (234 aa). Residues C120 and C351 are joined by a disulfide bond. C127, C131, and C134 together coordinate [4Fe-4S] cluster. Residues 177 to 178, S209, 232 to 234, and N308 contribute to the S-adenosyl-L-methionine site; these read GE and SLH. C351 acts as the S-methylcysteine intermediate in catalysis.

It belongs to the radical SAM superfamily. RlmN family. [4Fe-4S] cluster serves as cofactor.

It is found in the cytoplasm. The enzyme catalyses adenosine(2503) in 23S rRNA + 2 reduced [2Fe-2S]-[ferredoxin] + 2 S-adenosyl-L-methionine = 2-methyladenosine(2503) in 23S rRNA + 5'-deoxyadenosine + L-methionine + 2 oxidized [2Fe-2S]-[ferredoxin] + S-adenosyl-L-homocysteine. It catalyses the reaction adenosine(37) in tRNA + 2 reduced [2Fe-2S]-[ferredoxin] + 2 S-adenosyl-L-methionine = 2-methyladenosine(37) in tRNA + 5'-deoxyadenosine + L-methionine + 2 oxidized [2Fe-2S]-[ferredoxin] + S-adenosyl-L-homocysteine. Functionally, specifically methylates position 2 of adenine 2503 in 23S rRNA and position 2 of adenine 37 in tRNAs. Confers resistance to some classes of antibiotics. This is Probable dual-specificity RNA methyltransferase RlmN from Staphylococcus aureus (strain MW2).